A 308-amino-acid polypeptide reads, in one-letter code: Ribosomal RNA small subunit methyltransferase H (308 aa).

S-adenosyl-L-methionine-binding positions include 34–36 (GGH), Asp54, Phe85, Asp99, and Gln106.

The protein belongs to the methyltransferase superfamily. RsmH family.

The protein resides in the cytoplasm. The enzyme catalyses cytidine(1402) in 16S rRNA + S-adenosyl-L-methionine = N(4)-methylcytidine(1402) in 16S rRNA + S-adenosyl-L-homocysteine + H(+). In terms of biological role, specifically methylates the N4 position of cytidine in position 1402 (C1402) of 16S rRNA. The chain is Ribosomal RNA small subunit methyltransferase H from Dichelobacter nodosus (strain VCS1703A).